We begin with the raw amino-acid sequence, 126 residues long: Small ribosomal subunit protein eS24 (126 aa).

Residues 98–126 (LYTKPQTSRKQRKEKKNRLKKAGKKTAKK) are disordered. A compositionally biased stretch (basic residues) spans 104 to 126 (TSRKQRKEKKNRLKKAGKKTAKK).

Belongs to the eukaryotic ribosomal protein eS24 family.

This chain is Small ribosomal subunit protein eS24 (rps24), found in Dictyostelium discoideum (Social amoeba).